A 183-amino-acid polypeptide reads, in one-letter code: Large ribosomal subunit protein uL6 (183 aa).

The protein belongs to the universal ribosomal protein uL6 family. In terms of assembly, part of the 50S ribosomal subunit.

This protein binds to the 23S rRNA, and is important in its secondary structure. It is located near the subunit interface in the base of the L7/L12 stalk, and near the tRNA binding site of the peptidyltransferase center. The sequence is that of Large ribosomal subunit protein uL6 from Chlamydia muridarum (strain MoPn / Nigg).